An 837-amino-acid chain; its full sequence is Periplasmic nitrate reductase (837 aa).

The segment at residues 1–33 (MTTPKLDRRQVLKLEAAAMAALAGGIAMPAAAA) is a signal peptide (tat-type signal). In terms of domain architecture, 4Fe-4S Mo/W bis-MGD-type spans 44–100 (LKWDKAACRFCGTGCSVMVATKENRVVATHGDTKSEVNRGLNCVKGYFLSKIMYGHD). 4 residues coordinate [4Fe-4S] cluster: cysteine 51, cysteine 54, cysteine 58, and cysteine 86. Mo-bis(molybdopterin guanine dinucleotide) is bound by residues lysine 88, glutamine 155, asparagine 180, cysteine 184, 217-224 (WGSNMAEM), 248-252 (STFEH), 267-269 (QTD), methionine 378, glutamine 382, asparagine 488, 514-515 (SD), lysine 537, aspartate 564, and 724-733 (TGRVLEHWHS). Tryptophan 800 provides a ligand contact to substrate. The Mo-bis(molybdopterin guanine dinucleotide) site is built by asparagine 808 and lysine 825.

The protein belongs to the prokaryotic molybdopterin-containing oxidoreductase family. NasA/NapA/NarB subfamily. As to quaternary structure, component of the periplasmic nitrate reductase NapAB complex composed of NapA and NapB. The cofactor is [4Fe-4S] cluster. Requires Mo-bis(molybdopterin guanine dinucleotide) as cofactor. Post-translationally, predicted to be exported by the Tat system. The position of the signal peptide cleavage has not been experimentally proven.

The protein localises to the periplasm. It catalyses the reaction 2 Fe(II)-[cytochrome] + nitrate + 2 H(+) = 2 Fe(III)-[cytochrome] + nitrite + H2O. In terms of biological role, catalytic subunit of the periplasmic nitrate reductase complex NapAB. Receives electrons from NapB and catalyzes the reduction of nitrate to nitrite. The chain is Periplasmic nitrate reductase from Rhodopseudomonas palustris (strain BisB18).